The chain runs to 756 residues: 1-phosphatidylinositol 4,5-bisphosphate phosphodiesterase delta-1 (756 aa).

Residues 21 to 130 (ALLKGSQLLK…WVLGLHKIIH (110 aa)) form the PH domain. Residues 30–57 (KVKSSSWRRERFYKLQEDCKTIWQESRK) are substrate binding. 2 consecutive EF-hand domains span residues 140-175 (KLQH…LNIQ) and 176-211 (VDDS…LTQR). 10 residues coordinate Ca(2+): Asp153, Asn155, Asp157, Lys159, Glu164, Asp189, Ser191, Thr193, Ser195, and Glu200. Residue Ser191 is glycosylated (O-linked (GlcNAc) serine). O-linked (GlcNAc) threonine glycosylation is present at Thr193. One can recognise a PI-PLC X-box domain in the interval 296 to 440 (QDMGQPLSHY…LKGKILLKGK (145 aa)). His311 is a catalytic residue. Ca(2+) contacts are provided by Asn312, Glu341, and Asp343. His356 is an active-site residue. Ca(2+) is bound at residue Glu390. Substrate contacts are provided by Lys438 and Lys440. At Thr457 the chain carries Phosphothreonine. Ser460 is modified (phosphoserine). The region spanning 492 to 609 (LSDMVIYCKS…GYVLKPAFLR (118 aa)) is the PI-PLC Y-box domain. Substrate is bound by residues Ser522 and Arg549. Positions 611–737 (PNGTFNPRAL…QGYRHVHLMS (127 aa)) constitute a C2 domain. Ca(2+) is bound by residues Ile651, Asp653, Asn677, Asp706, Tyr707, and Asp708.

In terms of assembly, interacts with TGM2. Requires Ca(2+) as cofactor. Strongly expressed in lung, liver and heart. Also expressed at least in pancreas, kidney, skeletal muscle, placenta and brain.

The enzyme catalyses a 1,2-diacyl-sn-glycero-3-phospho-(1D-myo-inositol-4,5-bisphosphate) + H2O = 1D-myo-inositol 1,4,5-trisphosphate + a 1,2-diacyl-sn-glycerol + H(+). It carries out the reaction a 1,2-diacyl-sn-glycero-3-phospho-(1D-myo-inositol) + H2O = 1D-myo-inositol 1-phosphate + a 1,2-diacyl-sn-glycerol + H(+). Its function is as follows. The production of the second messenger molecules diacylglycerol (DAG) and inositol 1,4,5-trisphosphate (IP3) is mediated by activated phosphatidylinositol-specific phospholipase C enzymes. Essential for trophoblast and placental development. Binds phosphatidylinositol 4,5-bisphosphate. In Homo sapiens (Human), this protein is 1-phosphatidylinositol 4,5-bisphosphate phosphodiesterase delta-1.